The following is a 259-amino-acid chain: Phosphate import ATP-binding protein PstB 1 (259 aa).

Residues 13-254 form the ABC transporter domain; that stretch reads IQVRGLEFFY…PSKTQTEDYI (242 aa). 45–52 is a binding site for ATP; that stretch reads GPSGCGKS.

This sequence belongs to the ABC transporter superfamily. Phosphate importer (TC 3.A.1.7) family. In terms of assembly, the complex is composed of two ATP-binding proteins (PstB), two transmembrane proteins (PstC and PstA) and a solute-binding protein (PstS).

It is found in the cell inner membrane. It catalyses the reaction phosphate(out) + ATP + H2O = ADP + 2 phosphate(in) + H(+). Its function is as follows. Part of the ABC transporter complex PstSACB involved in phosphate import. Responsible for energy coupling to the transport system. The protein is Phosphate import ATP-binding protein PstB 1 of Pseudomonas savastanoi pv. phaseolicola (strain 1448A / Race 6) (Pseudomonas syringae pv. phaseolicola (strain 1448A / Race 6)).